A 214-amino-acid chain; its full sequence is Large ribosomal subunit protein uL3 (214 aa).

Positions 119–159 (GVKRHGFAGGPKTHGQSDRHRAPGSIGPTTDPGRVHKGKRM) are disordered.

The protein belongs to the universal ribosomal protein uL3 family. As to quaternary structure, part of the 50S ribosomal subunit. Forms a cluster with proteins L14 and L19.

In terms of biological role, one of the primary rRNA binding proteins, it binds directly near the 3'-end of the 23S rRNA, where it nucleates assembly of the 50S subunit. This is Large ribosomal subunit protein uL3 from Thermomicrobium roseum (strain ATCC 27502 / DSM 5159 / P-2).